Reading from the N-terminus, the 1192-residue chain is Homeodomain-interacting protein kinase 3 (1192 aa).

Lys-27 participates in a covalent cross-link: Glycyl lysine isopeptide (Lys-Gly) (interchain with G-Cter in SUMO); alternate. Lys-27 is covalently cross-linked (Glycyl lysine isopeptide (Lys-Gly) (interchain with G-Cter in SUMO2); alternate). Positions 197–525 (YEVLDFLGRG…PIETLNHPFV (329 aa)) constitute a Protein kinase domain. Residues 203-211 (LGRGTFGQV) and Lys-226 contribute to the ATP site. Asp-322 acts as the Proton acceptor in catalysis. Residue Tyr-359 is modified to Phosphotyrosine. The tract at residues 767–921 (QNRSNSLQNT…NSMSDDEQES (155 aa)) is interaction with AR. Positions 775–868 (NTNIPHSAFI…SPRPSLRECK (94 aa)) are interaction with FAS. A disordered region spans residues 799 to 829 (CVDTQDNHTSEGEAGTCREASVRQDSSVSDK). The segment at 832–988 (QTIIIADSPS…ESGLSVDEHM (157 aa)) is required for localization to nuclear speckles. The interval 843-895 (AVSVITISSDSDDEETSPRPSLRECKGSLDCEACQSTLNIDRMCSLSSPDSTL) is SUMO interaction motifs (SIM); required for nuclear localization and kinase activity. The tract at residues 847–857 (ITISSDSDDEE) is interaction with UBL1. Positions 889-906 (SSPDSTLSTSSSGQSSPS) are enriched in low complexity. Disordered stretches follow at residues 889–943 (SSPD…PFAE) and 956–1023 (LGTC…KPAA). Lys-1185 participates in a covalent cross-link: Glycyl lysine isopeptide (Lys-Gly) (interchain with G-Cter in SUMO).

Belongs to the protein kinase superfamily. CMGC Ser/Thr protein kinase family. HIPK subfamily. As to quaternary structure, interacts with UBL1/SUMO-1. Interacts with and stabilizes ligand-bound androgen receptor (AR). Interacts with Nkx1-2. Interacts with FAS and DAXX. Probably part of a complex consisting of HIPK3, FAS and FADD. Binds to NR5A1/SF1, SPEN/MINT and RUNX2. In terms of processing, autophosphorylated, but autophosphorylation is not required for catalytic activity. Post-translationally, may be sumoylated. In terms of tissue distribution, heart, skeletal muscle, spleen, testis and lung.

It localises to the cytoplasm. The protein localises to the nucleus. It carries out the reaction L-seryl-[protein] + ATP = O-phospho-L-seryl-[protein] + ADP + H(+). The enzyme catalyses L-threonyl-[protein] + ATP = O-phospho-L-threonyl-[protein] + ADP + H(+). Its function is as follows. Serine/threonine-protein kinase involved in transcription regulation, apoptosis and steroidogenic gene expression. Phosphorylates JUN and RUNX2. Seems to negatively regulate apoptosis by promoting FADD phosphorylation. Enhances androgen receptor-mediated transcription. May act as a transcriptional corepressor for NK homeodomain transcription factors. The phosphorylation of NR5A1 activates SF1 leading to increased steroidogenic gene expression upon cAMP signaling pathway stimulation. In osteoblasts, supports transcription activation: phosphorylates RUNX2 that synergizes with SPEN/MINT to enhance FGFR2-mediated activation of the osteocalcin FGF-responsive element (OCFRE). In Mus musculus (Mouse), this protein is Homeodomain-interacting protein kinase 3 (Hipk3).